We begin with the raw amino-acid sequence, 126 residues long: MHLSLLKAKIHRATVTHAELNYEGSIAIDGLLLEATGIREFEQVHIWDVTNGARFSTYAIRAEDGSGIMSLNGGAARHVQVGDLIIVAAFASMSEDEAKTFKPNLVYVNARNAISHTNHSIPTQAA.

Residue Ser25 is the Schiff-base intermediate with substrate; via pyruvic acid of the active site. At Ser25 the chain carries Pyruvic acid (Ser). Position 57 (Thr57) interacts with substrate. Tyr58 (proton donor) is an active-site residue. Gly73 to Ala75 contributes to the substrate binding site.

Belongs to the PanD family. Heterooctamer of four alpha and four beta subunits. Pyruvate is required as a cofactor. Is synthesized initially as an inactive proenzyme, which is activated by self-cleavage at a specific serine bond to produce a beta-subunit with a hydroxyl group at its C-terminus and an alpha-subunit with a pyruvoyl group at its N-terminus.

The protein resides in the cytoplasm. The enzyme catalyses L-aspartate + H(+) = beta-alanine + CO2. It functions in the pathway cofactor biosynthesis; (R)-pantothenate biosynthesis; beta-alanine from L-aspartate: step 1/1. Catalyzes the pyruvoyl-dependent decarboxylation of aspartate to produce beta-alanine. The sequence is that of Aspartate 1-decarboxylase from Xanthomonas oryzae pv. oryzae (strain MAFF 311018).